We begin with the raw amino-acid sequence, 302 residues long: Sushi domain-containing protein 6 (302 aa).

Positions 1–39 are cleaved as a signal peptide; the sequence is MCHGKIAPKSSSEFVVTSVGHGVFLQLVILCALLGDGLA. Residues 40-104 form the Sushi domain; it reads SVCPLPPEPE…TPAMEVSCHL (65 aa). Cystine bridges form between cysteine 42–cysteine 89 and cysteine 74–cysteine 102. The helical transmembrane segment at 120–140 threads the bilayer; it reads IVASTASSVALILLLVVLFVL. Disordered regions lie at residues 202-241 and 256-302; these read GSAP…CEAW and TSSW…LKEA. Polar residues-rich tracts occupy residues 212–222, 256–267, and 279–290; these read REQQLQGQEAC, TSSWVAGSGSSR, and SDIQSLLSLTSE.

The protein resides in the membrane. Its function is as follows. May play a role in growth-suppressive activity and cell death. May be involved in the production of chemokine molecules in umbilical vein endothelial cells (HUVECs) cultured in THP1 monocyte LPS-induced medium. Plays a role in preventing tumor onset. The protein is Sushi domain-containing protein 6 of Mus musculus (Mouse).